The chain runs to 417 residues: Serine hydroxymethyltransferase (417 aa).

An N6-acetyllysine modification is found at Lys54. (6S)-5,6,7,8-tetrahydrofolate is bound by residues Leu121 and 125–127 (GHL). The residue at position 229 (Lys229) is an N6-(pyridoxal phosphate)lysine. Residues Lys250, Lys285, and Lys354 each carry the N6-acetyllysine modification. A (6S)-5,6,7,8-tetrahydrofolate-binding site is contributed by 355–357 (SPF). Lys375 bears the N6-acetyllysine mark.

Belongs to the SHMT family. Homodimer. Pyridoxal 5'-phosphate is required as a cofactor.

It is found in the cytoplasm. It catalyses the reaction (6R)-5,10-methylene-5,6,7,8-tetrahydrofolate + glycine + H2O = (6S)-5,6,7,8-tetrahydrofolate + L-serine. It functions in the pathway one-carbon metabolism; tetrahydrofolate interconversion. The protein operates within amino-acid biosynthesis; glycine biosynthesis; glycine from L-serine: step 1/1. In terms of biological role, catalyzes the reversible interconversion of serine and glycine with tetrahydrofolate (THF) serving as the one-carbon carrier. This reaction serves as the major source of one-carbon groups required for the biosynthesis of purines, thymidylate, methionine, and other important biomolecules. Also exhibits THF-independent aldolase activity toward beta-hydroxyamino acids, producing glycine and aldehydes, via a retro-aldol mechanism. This is Serine hydroxymethyltransferase from Shigella sonnei (strain Ss046).